The chain runs to 311 residues: Cytochrome f (311 aa).

The N-terminal stretch at 1 to 27 (MKHFFKSLTLAIALAASVLFWSPQAQA) is a signal peptide. Tyrosine 28, cysteine 48, cysteine 51, and histidine 52 together coordinate heme. The chain crosses the membrane as a helical span at residues 279–296 (WLLVFFAAITLSQILLVL).

Belongs to the cytochrome f family. The 4 large subunits of the cytochrome b6-f complex are cytochrome b6, subunit IV (17 kDa polypeptide, PetD), cytochrome f and the Rieske protein, while the 4 small subunits are PetG, PetL, PetM and PetN. The complex functions as a dimer. The cofactor is heme.

The protein resides in the cellular thylakoid membrane. Its function is as follows. Component of the cytochrome b6-f complex, which mediates electron transfer between photosystem II (PSII) and photosystem I (PSI), cyclic electron flow around PSI, and state transitions. This chain is Cytochrome f, found in Synechococcus elongatus.